We begin with the raw amino-acid sequence, 1065 residues long: DNA-directed RNA polymerase subunit beta (1065 aa).

Belongs to the RNA polymerase beta chain family. In plastids the minimal PEP RNA polymerase catalytic core is composed of four subunits: alpha, beta, beta', and beta''. When a (nuclear-encoded) sigma factor is associated with the core the holoenzyme is formed, which can initiate transcription.

The protein resides in the plastid. It is found in the chloroplast. The catalysed reaction is RNA(n) + a ribonucleoside 5'-triphosphate = RNA(n+1) + diphosphate. Its function is as follows. DNA-dependent RNA polymerase catalyzes the transcription of DNA into RNA using the four ribonucleoside triphosphates as substrates. This is DNA-directed RNA polymerase subunit beta from Marchantia polymorpha (Common liverwort).